A 305-amino-acid chain; its full sequence is Nucleotide-binding protein Rxyl_2009 (305 aa).

Residue glycine 24 to serine 31 coordinates ATP. Aspartate 75–glycine 78 contacts GTP.

This sequence belongs to the RapZ-like family.

In terms of biological role, displays ATPase and GTPase activities. This chain is Nucleotide-binding protein Rxyl_2009, found in Rubrobacter xylanophilus (strain DSM 9941 / JCM 11954 / NBRC 16129 / PRD-1).